A 130-amino-acid chain; its full sequence is Small ribosomal subunit protein uS9 (130 aa).

A disordered region spans residues 111–130; that stretch reads VERKKVGLRKARRRPQFSKR. Residues 116 to 130 are compositionally biased toward basic residues; that stretch reads VGLRKARRRPQFSKR.

Belongs to the universal ribosomal protein uS9 family.

This Enterobacter sp. (strain 638) protein is Small ribosomal subunit protein uS9.